A 461-amino-acid polypeptide reads, in one-letter code: Cysteine--tRNA ligase (461 aa).

Position 30 (Cys-30) interacts with Zn(2+). A 'HIGH' region motif is present at residues 32 to 42 (VTVYDLCHIGH). Cys-211, His-236, and Glu-240 together coordinate Zn(2+). Residues 268–272 (KMSKS) carry the 'KMSKS' region motif. Residue Lys-271 coordinates ATP.

Belongs to the class-I aminoacyl-tRNA synthetase family. As to quaternary structure, monomer. Zn(2+) is required as a cofactor.

It is found in the cytoplasm. It catalyses the reaction tRNA(Cys) + L-cysteine + ATP = L-cysteinyl-tRNA(Cys) + AMP + diphosphate. In Shewanella sp. (strain MR-7), this protein is Cysteine--tRNA ligase.